A 1068-amino-acid polypeptide reads, in one-letter code: Sucrose-phosphate synthase (1068 aa).

Disordered regions lie at residues 18–47 (HTSSRGAGGGGGGGDPRSPTKAASPRGAHM) and 118–139 (KEQEQVRREATEDLAEDLSEGE). Over residues 23-32 (GAGGGGGGGD) the composition is skewed to gly residues. Residues 118–128 (KEQEQVRREAT) are compositionally biased toward basic and acidic residues.

It belongs to the glycosyltransferase 1 family. In terms of assembly, homodimer or homotetramer.

The catalysed reaction is beta-D-fructose 6-phosphate + UDP-alpha-D-glucose = sucrose 6(F)-phosphate + UDP + H(+). Its pathway is glycan biosynthesis; sucrose biosynthesis; sucrose from D-fructose 6-phosphate and UDP-alpha-D-glucose: step 1/2. Its activity is regulated as follows. Activity is regulated by phosphorylation and moderated by concentration of metabolites and light. Plays a role in photosynthetic sucrose synthesis by catalyzing the rate-limiting step of sucrose biosynthesis from UDP-glucose and fructose- 6-phosphate. Involved in the regulation of carbon partitioning in the leaves of plants. May regulate the synthesis of sucrose and therefore play a major role as a limiting factor in the export of photoassimilates out of the leaf. Plays a role for sucrose availability that is essential for plant growth and fiber elongation. The sequence is that of Sucrose-phosphate synthase from Zea mays (Maize).